The sequence spans 569 residues: Dihydroxy-acid dehydratase (569 aa).

[2Fe-2S] cluster is bound at residue Cys61. Asp93 is a binding site for Mg(2+). Cys134 contacts [2Fe-2S] cluster. The Mg(2+) site is built by Asp135 and Lys136. Lys136 bears the N6-carboxylysine mark. Residue Cys211 coordinates [2Fe-2S] cluster. Glu462 contacts Mg(2+). Ser488 serves as the catalytic Proton acceptor.

It belongs to the IlvD/Edd family. Homodimer. [2Fe-2S] cluster is required as a cofactor. It depends on Mg(2+) as a cofactor.

The enzyme catalyses (2R)-2,3-dihydroxy-3-methylbutanoate = 3-methyl-2-oxobutanoate + H2O. The catalysed reaction is (2R,3R)-2,3-dihydroxy-3-methylpentanoate = (S)-3-methyl-2-oxopentanoate + H2O. The protein operates within amino-acid biosynthesis; L-isoleucine biosynthesis; L-isoleucine from 2-oxobutanoate: step 3/4. It functions in the pathway amino-acid biosynthesis; L-valine biosynthesis; L-valine from pyruvate: step 3/4. Its function is as follows. Functions in the biosynthesis of branched-chain amino acids. Catalyzes the dehydration of (2R,3R)-2,3-dihydroxy-3-methylpentanoate (2,3-dihydroxy-3-methylvalerate) into 2-oxo-3-methylpentanoate (2-oxo-3-methylvalerate) and of (2R)-2,3-dihydroxy-3-methylbutanoate (2,3-dihydroxyisovalerate) into 2-oxo-3-methylbutanoate (2-oxoisovalerate), the penultimate precursor to L-isoleucine and L-valine, respectively. In Tropheryma whipplei (strain TW08/27) (Whipple's bacillus), this protein is Dihydroxy-acid dehydratase.